A 244-amino-acid chain; its full sequence is Small ribosomal subunit protein uS2 (244 aa).

Belongs to the universal ribosomal protein uS2 family.

This is Small ribosomal subunit protein uS2 from Psychromonas ingrahamii (strain DSM 17664 / CCUG 51855 / 37).